The primary structure comprises 407 residues: Transmembrane protein 184B (407 aa).

Over residues 1–28 (MTVRGAALAPDPASPTTTTASPSVSATP) the composition is skewed to low complexity. Residues 1-31 (MTVRGAALAPDPASPTTTTASPSVSATPEGS) are disordered. Transmembrane regions (helical) follow at residues 40-60 (FLMTTAAQAISGFFVWTALLI), 84-104 (ILFIVPIYAFDSWLSLLFFTN), 121-141 (FVIYNFLSLCYEYLGGESAIM), 178-198 (LQFCVVKPLMAVSTVILQAFG), 214-234 (VTIIYNISVSLALYALFLFYF), 249-269 (FFMVKSVIFLSFWQGMLLAIL), and 290-310 (VAAGYQDFIICVEMFFAALAL). The segment at 369 to 395 (TLEPGPTWRGGTHSLSRSHSLSGARDN) is disordered. A phosphoserine mark is found at serine 388, serine 402, and serine 403.

Belongs to the TMEM184 family.

The protein resides in the membrane. In terms of biological role, may activate the MAP kinase signaling pathway. This chain is Transmembrane protein 184B (Tmem184b), found in Mus musculus (Mouse).